Reading from the N-terminus, the 134-residue chain is MGFLTAVTQGLVRGADRMSKWTSKRGPRTFTKSRGAKKTGFYTNRKFVQIKEMVPEFVVPDLTGFKLKPYVNYRAPAGIDTPLTAKALFLETVAPAIEKDFKEGTFDANNLEKYGFEPTQEGKLFQLYPKNFPR.

The N-terminal 13 residues, 1–13 (MGFLTAVTQGLVR), are a transit peptide targeting the mitochondrion.

This sequence belongs to the mitochondrion-specific ribosomal protein mL41 family. In terms of assembly, component of the mitochondrial ribosome large subunit (39S) which comprises a 16S rRNA and about 50 distinct proteins. Interacts with BCL2. Was also identified in the 28S mitochondrial ribosome.

Its subcellular location is the mitochondrion. Its function is as follows. Component of the mitochondrial ribosome large subunit. Also involved in apoptosis and cell cycle. Enhances p53/TP53 stability, thereby contributing to p53/TP53-induced apoptosis in response to growth-inhibitory condition. Enhances p53/TP53 translocation to the mitochondria. Has the ability to arrest the cell cycle at the G1 phase, possibly by stabilizing the CDKN1A and CDKN1B (p27Kip1) proteins. This is Large ribosomal subunit protein mL41 (Mrpl41) from Rattus norvegicus (Rat).